Reading from the N-terminus, the 138-residue chain is Protein FAM216B (138 aa).

This sequence belongs to the FAM216 family.

This chain is Protein FAM216B (Fam216b), found in Mus musculus (Mouse).